A 336-amino-acid chain; its full sequence is UbiA prenyltransferase domain-containing protein 1 (336 aa).

The disordered stretch occupies residues 1–22 (MQEMKPAALSGSNGLNGASGSS). Positions 7–22 (AALSGSNGLNGASGSS) are enriched in low complexity. 7 helical membrane-spanning segments follow: residues 79–99 (LLLLLVCAVAVLLVHGAGNLV), 129–149 (VVMFGAVLYSAGCLCATLLYF), 158–178 (LALIYFGGLSSSFLYTGGIGL), 180–200 (YVALGDVVILITFGPLAVMFA), 201–221 (HAVQVGYLSVLPLVYAVPLAL), 254–274 (LSYVIYNLLLFVPYLLFCILA), and 315–335 (LLMGLFYVFGIILAPQGSLPL).

Belongs to the UbiA prenyltransferase family.

The protein localises to the endoplasmic reticulum membrane. The protein resides in the golgi apparatus membrane. Its subcellular location is the mitochondrion membrane. The catalysed reaction is menadiol + (2E,6E,10E)-geranylgeranyl diphosphate = menaquinol-4 + diphosphate. The enzyme catalyses all-trans-decaprenyl diphosphate + 4-hydroxybenzoate = 4-hydroxy-3-(all-trans-decaprenyl)benzoate + diphosphate. The protein operates within quinol/quinone metabolism; menaquinone biosynthesis. It functions in the pathway cofactor biosynthesis; ubiquinone biosynthesis. Prenyltransferase that mediates the formation of menaquinone-4 (MK-4) and coenzyme Q10. MK-4 is a vitamin K2 isoform required for endothelial cell development. Mediates the conversion of phylloquinone (PK) into MK-4, probably by cleaving the side chain of phylloquinone (PK) to release 2-methyl-1,4-naphthoquinone (menadione; K3) and then prenylating it with geranylgeranyl pyrophosphate (GGPP) to form MK-4. Also plays a role in cardiovascular development independently of MK-4 biosynthesis, by acting as a coenzyme Q10 biosynthetic enzyme: coenzyme Q10, also named ubiquinone, plays an important antioxidant role in the cardiovascular system. Mediates biosynthesis of coenzyme Q10 in the Golgi membrane, leading to protect cardiovascular tissues from nos3/eNOS-dependent oxidative stress. In Danio rerio (Zebrafish), this protein is UbiA prenyltransferase domain-containing protein 1 (ubiad1).